A 418-amino-acid chain; its full sequence is Tyrosine--tRNA ligase (418 aa).

Tyr-34 serves as a coordination point for L-tyrosine. Positions 39–48 (PTADSLHLGH) match the 'HIGH' region motif. Residues Tyr-169 and Gln-173 each coordinate L-tyrosine. The 'KMSKS' region signature appears at 229-233 (KFGKS). Lys-232 serves as a coordination point for ATP. Residues 352 to 418 (LNIVDLLVTA…GKKKYFVLTY (67 aa)) form the S4 RNA-binding domain.

This sequence belongs to the class-I aminoacyl-tRNA synthetase family. TyrS type 1 subfamily. As to quaternary structure, homodimer.

It localises to the cytoplasm. It carries out the reaction tRNA(Tyr) + L-tyrosine + ATP = L-tyrosyl-tRNA(Tyr) + AMP + diphosphate + H(+). In terms of biological role, catalyzes the attachment of tyrosine to tRNA(Tyr) in a two-step reaction: tyrosine is first activated by ATP to form Tyr-AMP and then transferred to the acceptor end of tRNA(Tyr). The protein is Tyrosine--tRNA ligase of Streptococcus gordonii (strain Challis / ATCC 35105 / BCRC 15272 / CH1 / DL1 / V288).